Reading from the N-terminus, the 433-residue chain is Phosphoribosylamine--glycine ligase (433 aa).

Positions R110–K317 constitute an ATP-grasp domain. I137–T194 is an ATP binding site. 3 residues coordinate Mg(2+): Q275, E287, and N289. Mn(2+) is bound by residues Q275, E287, and N289.

Belongs to the GARS family. The cofactor is Mg(2+). Mn(2+) is required as a cofactor.

It carries out the reaction 5-phospho-beta-D-ribosylamine + glycine + ATP = N(1)-(5-phospho-beta-D-ribosyl)glycinamide + ADP + phosphate + H(+). It participates in purine metabolism; IMP biosynthesis via de novo pathway; N(1)-(5-phospho-D-ribosyl)glycinamide from 5-phospho-alpha-D-ribose 1-diphosphate: step 2/2. This chain is Phosphoribosylamine--glycine ligase, found in Methanosarcina barkeri (strain Fusaro / DSM 804).